A 117-amino-acid chain; its full sequence is Glycine cleavage system H-like protein (117 aa).

Residues 21–103 (IVKLGLSSQM…ESEGWFVVLQ (83 aa)) form the Lipoyl-binding domain. Residue Lys-62 is modified to N6-lipoyllysine.

This sequence belongs to the GcvH family. (R)-lipoate is required as a cofactor.

The sequence is that of Glycine cleavage system H-like protein from Chlamydia trachomatis serovar L2 (strain ATCC VR-902B / DSM 19102 / 434/Bu).